The primary structure comprises 20 residues: Brevinin-1DYc (20 aa).

Cysteine 14 and cysteine 20 form a disulfide bridge.

As to expression, expressed by the skin glands.

The protein resides in the secreted. Its function is as follows. Antimicrobial peptide. Has low activity against the Gram-positive bacterium S.aureus and the Gram-negative bacterium E.coli (MIC&lt;15 uM). Has a strong hemolytic activity. This Rana dybowskii (Dybovsky's frog) protein is Brevinin-1DYc.